We begin with the raw amino-acid sequence, 185 residues long: Ribosome-recycling factor (185 aa).

This sequence belongs to the RRF family.

It localises to the cytoplasm. Functionally, responsible for the release of ribosomes from messenger RNA at the termination of protein biosynthesis. May increase the efficiency of translation by recycling ribosomes from one round of translation to another. This is Ribosome-recycling factor from Hamiltonella defensa subsp. Acyrthosiphon pisum (strain 5AT).